Reading from the N-terminus, the 108-residue chain is MSFSRRPKVTKSDIVDQISLNIRNNNLKLEKKYIRLVIDAFFEELKGNLCSNNVIEFRSFGTFEVRKRKGRLNARNPQTGEYVKVLDHHVAYFRPGKDLKERVWGIKG.

It belongs to the bacterial histone-like protein family.

Its function is as follows. Histone-like DNA-binding protein which is capable of wrapping DNA to stabilize it, and thus to prevent its denaturation under extreme environmental conditions. The protein is DNA-binding protein HBbu (hbb) of Borreliella japonica (Borrelia japonica).